The primary structure comprises 584 residues: uncharacterized protein (584 aa).

Positions 1 to 27 (MGLSRKKIFTWPLLLTGMAVVSTTFSS) are cleaved as a signal peptide. A lipid anchor (N-palmitoyl cysteine) is attached at cysteine 28. Residue cysteine 28 is the site of S-diacylglycerol cysteine attachment. Residues 530–570 (NLPKKEGSTNQANQQTNQTNRSTDATKKDSSSDETNKNPLA) are disordered. Over residues 538 to 552 (TNQANQQTNQTNRST) the composition is skewed to low complexity. Residues 553–565 (DATKKDSSSDETN) are compositionally biased toward basic and acidic residues.

Belongs to the MG067/MG068/MG395 family.

The protein localises to the cell membrane. This is an uncharacterized protein from Mycoplasmoides gallisepticum (strain R(low / passage 15 / clone 2)) (Mycoplasma gallisepticum).